A 266-amino-acid chain; its full sequence is Aliphatic sulfonates import ATP-binding protein SsuB (266 aa).

In terms of domain architecture, ABC transporter spans leucine 23–leucine 244. Glycine 55–serine 62 serves as a coordination point for ATP.

This sequence belongs to the ABC transporter superfamily. Aliphatic sulfonates importer (TC 3.A.1.17.2) family. As to quaternary structure, the complex is composed of two ATP-binding proteins (SsuB), two transmembrane proteins (SsuC) and a solute-binding protein (SsuA).

The protein resides in the cell inner membrane. The enzyme catalyses ATP + H2O + aliphatic sulfonate-[sulfonate-binding protein]Side 1 = ADP + phosphate + aliphatic sulfonateSide 2 + [sulfonate-binding protein]Side 1.. Functionally, part of the ABC transporter complex SsuABC involved in aliphatic sulfonates import. Responsible for energy coupling to the transport system. This is Aliphatic sulfonates import ATP-binding protein SsuB from Pectobacterium atrosepticum (strain SCRI 1043 / ATCC BAA-672) (Erwinia carotovora subsp. atroseptica).